Reading from the N-terminus, the 113-residue chain is Endoribonuclease SymE (113 aa).

The 46-residue stretch at 29 to 74 (SRYPDYSRIPAITLKGQWLEAAGFATGTAVDVKVMEGCIVLTAQPP) folds into the SpoVT-AbrB domain.

Belongs to the SymE family.

Its subcellular location is the cytoplasm. Involved in the degradation and recycling of damaged RNA. It is itself a target for degradation by the ATP-dependent protease Lon. The sequence is that of Endoribonuclease SymE from Escherichia coli (strain K12 / MC4100 / BW2952).